The primary structure comprises 406 residues: Paracaspase (406 aa).

Positions 193-374 (IGNSKYSQHR…TERKNNNIST (182 aa)) are caspase-like. Residues His-266 and Cys-311 contribute to the active site.

The protein belongs to the peptidase C14B family.

In terms of biological role, not required for DIF-induced autophagic cell death and necrotic cell death. This chain is Paracaspase (pcp), found in Dictyostelium discoideum (Social amoeba).